The sequence spans 182 residues: Acireductone dioxygenase (182 aa).

Fe(2+)-binding residues include histidine 100, histidine 102, glutamate 106, and histidine 145. Residues histidine 100, histidine 102, glutamate 106, and histidine 145 each contribute to the Ni(2+) site.

It belongs to the acireductone dioxygenase (ARD) family. Monomer. The cofactor is Fe(2+). Ni(2+) is required as a cofactor.

The catalysed reaction is 1,2-dihydroxy-5-(methylsulfanyl)pent-1-en-3-one + O2 = 3-(methylsulfanyl)propanoate + CO + formate + 2 H(+). It catalyses the reaction 1,2-dihydroxy-5-(methylsulfanyl)pent-1-en-3-one + O2 = 4-methylsulfanyl-2-oxobutanoate + formate + 2 H(+). The protein operates within amino-acid biosynthesis; L-methionine biosynthesis via salvage pathway; L-methionine from S-methyl-5-thio-alpha-D-ribose 1-phosphate: step 5/6. Its function is as follows. Catalyzes 2 different reactions between oxygen and the acireductone 1,2-dihydroxy-3-keto-5-methylthiopentene (DHK-MTPene) depending upon the metal bound in the active site. Fe-containing acireductone dioxygenase (Fe-ARD) produces formate and 2-keto-4-methylthiobutyrate (KMTB), the alpha-ketoacid precursor of methionine in the methionine recycle pathway. Ni-containing acireductone dioxygenase (Ni-ARD) produces methylthiopropionate, carbon monoxide and formate, and does not lie on the methionine recycle pathway. This is Acireductone dioxygenase from Nostoc sp. (strain PCC 7120 / SAG 25.82 / UTEX 2576).